The sequence spans 82 residues: Defensin-like protein 208 (82 aa).

Residues 1–29 (MAKNLNTVSFTVLLLVLLMASTGILETEA) form the signal peptide. 3 disulfide bridges follow: Cys38–Cys63, Cys50–Cys76, and Cys54–Cys78.

It belongs to the DEFL family.

It is found in the secreted. The chain is Defensin-like protein 208 from Arabidopsis thaliana (Mouse-ear cress).